We begin with the raw amino-acid sequence, 299 residues long: MLDKSRLRIAMQKSGRLSKESQQLLEQCGIKINLQQQRLLAFAENMPIDIMRVRDDDIPGLVMDDVVDLGIIGENVLEEELLTRRAQGEDPRYFTLRQLDFGGCRLSIALLLDTPWTGPECLRGKRIATSYPHLLKQYLDKLDITFKSCLLNGSVEVAPRAGLADAICDLVSTGATLEANGLREAEVIYRSKACLIQRDGELSVAKQSLVDKLLIRIQGVIQARESKYIMMHAPTERLDDIISLLTGAEQPTILPLAGDQHRVAMHMVSSETLFWETMENLKALGASSILVLPIEKMME.

This sequence belongs to the ATP phosphoribosyltransferase family. Long subfamily. In terms of assembly, equilibrium between an active dimeric form, an inactive hexameric form and higher aggregates. Interconversion between the various forms is largely reversible and is influenced by the natural substrates and inhibitors of the enzyme. Requires Mg(2+) as cofactor.

The protein localises to the cytoplasm. The catalysed reaction is 1-(5-phospho-beta-D-ribosyl)-ATP + diphosphate = 5-phospho-alpha-D-ribose 1-diphosphate + ATP. Its pathway is amino-acid biosynthesis; L-histidine biosynthesis; L-histidine from 5-phospho-alpha-D-ribose 1-diphosphate: step 1/9. With respect to regulation, feedback inhibited by histidine. Functionally, catalyzes the condensation of ATP and 5-phosphoribose 1-diphosphate to form N'-(5'-phosphoribosyl)-ATP (PR-ATP). Has a crucial role in the pathway because the rate of histidine biosynthesis seems to be controlled primarily by regulation of HisG enzymatic activity. This Sodalis glossinidius (strain morsitans) protein is ATP phosphoribosyltransferase.